The sequence spans 424 residues: Steryl acetyl hydrolase 1 (424 aa).

The residue at position 2 (Ala2) is an N-acetylalanine. The Cytoplasmic segment spans residues 2–45; sequence AANSGLDSKVEYYRLQENEIISAVSSEDADQNDAGFRLSTIHLH. Residues 46–66 form a helical; Signal-anchor for type II membrane protein membrane-spanning segment; that stretch reads LFHGLKFAALLFTVVPVFIIL. Topologically, residues 67-424 are lumenal; the sequence is DSMKIIFQRK…IARILEFMQS (358 aa). Asn85 is a glycosylation site (N-linked (GlcNAc...) asparagine). The Involved in the stabilization of the negatively charged intermediate by the formation of the oxyanion hole motif lies at 176 to 178; that stretch reads HGG. Ser250 is a catalytic residue. N-linked (GlcNAc...) asparagine glycosylation occurs at Asn283. Residue His395 is part of the active site. Residue Asn401 is glycosylated (N-linked (GlcNAc...) asparagine).

The protein belongs to the 'GDXG' lipolytic enzyme family.

It localises to the endoplasmic reticulum membrane. In terms of biological role, required for the deacetylation of acetylated sterols. Involved in the resistance to eugenol and pregnenolone toxicity. The chain is Steryl acetyl hydrolase 1 (SAY1) from Saccharomyces cerevisiae (strain ATCC 204508 / S288c) (Baker's yeast).